The following is a 161-amino-acid chain: Protein-export protein SecB (161 aa).

Belongs to the SecB family. In terms of assembly, homotetramer, a dimer of dimers. One homotetramer interacts with 1 SecA dimer.

The protein resides in the cytoplasm. In terms of biological role, one of the proteins required for the normal export of preproteins out of the cell cytoplasm. It is a molecular chaperone that binds to a subset of precursor proteins, maintaining them in a translocation-competent state. It also specifically binds to its receptor SecA. The chain is Protein-export protein SecB from Coxiella burnetii (strain Dugway 5J108-111).